A 215-amino-acid polypeptide reads, in one-letter code: Cytochrome b6 (215 aa).

Residues 32 to 52 traverse the membrane as a helical segment; sequence IFYCLGGITFTSFVIQVASGF. Position 35 (C35) interacts with heme c. Residues H86 and H100 each contribute to the heme b site. The next 3 membrane-spanning stretches (helical) occupy residues 90–110, 116–136, and 186–206; these read ASMM…TGGF, LTWV…VTGY, and LHTF…FLMI. H187 and H202 together coordinate heme b.

The protein belongs to the cytochrome b family. PetB subfamily. The 4 large subunits of the cytochrome b6-f complex are cytochrome b6, subunit IV (17 kDa polypeptide, PetD), cytochrome f and the Rieske protein, while the 4 small subunits are PetG, PetL, PetM and PetN. The complex functions as a dimer. Heme b serves as cofactor. The cofactor is heme c.

It localises to the plastid. It is found in the chloroplast thylakoid membrane. Its function is as follows. Component of the cytochrome b6-f complex, which mediates electron transfer between photosystem II (PSII) and photosystem I (PSI), cyclic electron flow around PSI, and state transitions. The chain is Cytochrome b6 from Chaetosphaeridium globosum (Charophycean green alga).